The following is a 144-amino-acid chain: Universal stress protein F (144 aa).

It belongs to the universal stress protein A family. In terms of assembly, homodimer.

This chain is Universal stress protein F (uspF), found in Escherichia coli (strain K12).